The sequence spans 166 residues: Small ribosomal subunit protein uS5 (166 aa).

Residues 11-74 (LQEKLIAVNR…EQAKRNLNKV (64 aa)) enclose the S5 DRBM domain.

The protein belongs to the universal ribosomal protein uS5 family. Part of the 30S ribosomal subunit. Contacts proteins S4 and S8.

In terms of biological role, with S4 and S12 plays an important role in translational accuracy. Its function is as follows. Located at the back of the 30S subunit body where it stabilizes the conformation of the head with respect to the body. In Aeromonas hydrophila subsp. hydrophila (strain ATCC 7966 / DSM 30187 / BCRC 13018 / CCUG 14551 / JCM 1027 / KCTC 2358 / NCIMB 9240 / NCTC 8049), this protein is Small ribosomal subunit protein uS5.